A 428-amino-acid chain; its full sequence is Spliceosome RNA helicase DDX39B (428 aa).

A compositionally biased stretch (acidic residues) spans 1–19 (MAENDVDNELLDYEEDEVE). Residues 1–32 (MAENDVDNELLDYEEDEVETAAGGDGSEAPAK) form a disordered region. At alanine 2 the chain carries N-acetylalanine. N6-acetyllysine; alternate is present on lysine 36. Residue lysine 36 forms a Glycyl lysine isopeptide (Lys-Gly) (interchain with G-Cter in SUMO2); alternate linkage. Phosphoserine occurs at positions 38 and 41. Residues 45–73 (SGFRDFLLKPELLRAIVDCGFEHPSEVQH) carry the Q motif motif. Residues 76 to 249 (IPQAILGMDV…RKFMQDPMEI (174 aa)) enclose the Helicase ATP-binding domain. 89–96 (AKSGMGKT) is a binding site for ATP. Threonine 172 carries the post-translational modification Phosphothreonine. A DECD box motif is present at residues 196–199 (DECD). One can recognise a Helicase C-terminal domain in the interval 261–422 (GLQQYYVKLK…ELPDEIDISS (162 aa)).

It belongs to the DEAD box helicase family. DECD subfamily. In terms of assembly, homodimer, and heterodimer with DDX39A. DDX39B interacts with the THO subcomplex to form the THO-DDX39B complex which multimerizes into a 28-subunit tetrameric assembly. Component of the transcription/export (TREX) complex at least composed of ALYREF/THOC4, DDX39B, SARNP/CIP29, CHTOP and the THO subcomplex; in the complex interacts with THOC2. THOC1-THOC2-THOC3-DDX39B subcomplex is sufficient for the interaction with export factor NXF1-NXT1. TREX seems to have a dynamic structure involving ATP-dependent remodeling. Within the TREX complex bridges ALYREF/THOC4 and the THO subcomplex, and, in a ATP-dependent manner, ALYREF/THOC4 and SARNP/CIP29. Component of the spliceosome. Interacts directly with U2AF2. Interacts with RBM8A, RNPS1 and SRRM1, FYTTD1/UIF, THOC1, MX1 and POLDIP3. Interacts with LUZP4. Interacts with SARNP/CIP29 (via the C-terminal domain); the interaction is direct and facilitates RNA binding of DDX39B.

It is found in the nucleus. Its subcellular location is the nucleus speckle. The protein localises to the cytoplasm. The catalysed reaction is ATP + H2O = ADP + phosphate + H(+). Involved in nuclear export of spliced and unspliced mRNA. Component of the TREX complex which is thought to couple mRNA transcription, processing and nuclear export, and specifically associates with spliced mRNA and not with unspliced pre-mRNA. The TREX complex is recruited to spliced mRNAs by a transcription-independent mechanism, binds to mRNA upstream of the exon-junction complex (EJC) and is recruited in a splicing- and cap-dependent manner to a region near the 5' end of the mRNA where it functions in mRNA export to the cytoplasm via the TAP/NXF1 pathway. The THOC1-THOC2-THOC3 core complex alone is sufficient to promote ATPase activity of DDX39B; in the complex THOC2 is the only component that directly interacts with DDX39B. Associates with SARNP/CIP29, which facilitates RNA binding of DDX39B and likely plays a role in mRNA export. May undergo several rounds of ATP hydrolysis during assembly of TREX to drive subsequent loading of components such as ALYREF/THOC4 and CHTOP onto mRNA. Also associates with pre-mRNA independent of ALYREF/THOC4. Involved in the nuclear export of intronless mRNA; the ATP-bound form is proposed to recruit export adapter ALYREF/THOC4 to intronless mRNA; its ATPase activity is cooperatively stimulated by RNA and ALYREF/THOC4 and ATP hydrolysis is thought to trigger the dissociation from RNA to allow the association of ALYREF/THOC4 and the NXF1-NXT1 heterodimer. Involved in transcription elongation and genome stability. Functionally, splice factor that is required for the first ATP-dependent step in spliceosome assembly and for the interaction of U2 snRNP with the branchpoint. Has both RNA-stimulated ATP binding/hydrolysis activity and ATP-dependent RNA unwinding activity. Even with the stimulation of RNA, the ATPase activity is weak. Can only hydrolyze ATP but not other NTPs. The RNA stimulation of ATPase activity does not have a strong preference for the sequence and length of the RNA. However, ssRNA stimulates the ATPase activity much more strongly than dsRNA. Can unwind 5' or 3' overhangs or blunt end RNA duplexes in vitro. The ATPase and helicase activities are not influenced by U2AF2; the effect of ALYREF/THOC4 is reported conflictingly. The polypeptide is Spliceosome RNA helicase DDX39B (DDX39B) (Canis lupus familiaris (Dog)).